A 65-amino-acid polypeptide reads, in one-letter code: Large ribosomal subunit protein bL35 (65 aa).

Residues 1–52 (MPKIKTNRGAAKRFKRTGSGGFKCVQSHRRHILTKKSTKRKRQLRSPDMVHP) form a disordered region. The span at 26–44 (QSHRRHILTKKSTKRKRQL) shows a compositional bias: basic residues.

Belongs to the bacterial ribosomal protein bL35 family.

This is Large ribosomal subunit protein bL35 from Methylococcus capsulatus (strain ATCC 33009 / NCIMB 11132 / Bath).